The following is a 750-amino-acid chain: Coiled-coil domain-containing protein 142 (750 aa).

The tract at residues 1–29 (MAQASRSGSLPPLVIVPPLRAQPGGTGEE) is disordered. The stretch at 87-110 (ALQRLRAVLLRLHREREQLLQARD) forms a coiled coil. The disordered stretch occupies residues 687-714 (LEPPLQPGTSPAQTGQLQSTLGGRGPSP). A compositionally biased stretch (polar residues) spans 693-707 (PGTSPAQTGQLQSTL).

This Homo sapiens (Human) protein is Coiled-coil domain-containing protein 142 (CCDC142).